The chain runs to 366 residues: Anhydro-N-acetylmuramic acid kinase (366 aa).

ATP is bound at residue 10 to 17; sequence GTSMDGID.

Belongs to the anhydro-N-acetylmuramic acid kinase family.

It catalyses the reaction 1,6-anhydro-N-acetyl-beta-muramate + ATP + H2O = N-acetyl-D-muramate 6-phosphate + ADP + H(+). It functions in the pathway amino-sugar metabolism; 1,6-anhydro-N-acetylmuramate degradation. Its pathway is cell wall biogenesis; peptidoglycan recycling. Its function is as follows. Catalyzes the specific phosphorylation of 1,6-anhydro-N-acetylmuramic acid (anhMurNAc) with the simultaneous cleavage of the 1,6-anhydro ring, generating MurNAc-6-P. Is required for the utilization of anhMurNAc either imported from the medium or derived from its own cell wall murein, and thus plays a role in cell wall recycling. This chain is Anhydro-N-acetylmuramic acid kinase, found in Legionella pneumophila (strain Paris).